A 292-amino-acid chain; its full sequence is 4-diphosphocytidyl-2-C-methyl-D-erythritol kinase (292 aa).

The active site involves K10. 100 to 110 (PIGSGLGGGSS) serves as a coordination point for ATP. The active site involves D142.

The protein belongs to the GHMP kinase family. IspE subfamily. Homodimer.

The enzyme catalyses 4-CDP-2-C-methyl-D-erythritol + ATP = 4-CDP-2-C-methyl-D-erythritol 2-phosphate + ADP + H(+). Its pathway is isoprenoid biosynthesis; isopentenyl diphosphate biosynthesis via DXP pathway; isopentenyl diphosphate from 1-deoxy-D-xylulose 5-phosphate: step 3/6. Functionally, catalyzes the phosphorylation of the position 2 hydroxy group of 4-diphosphocytidyl-2C-methyl-D-erythritol. In Buchnera aphidicola subsp. Schizaphis graminum (strain Sg), this protein is 4-diphosphocytidyl-2-C-methyl-D-erythritol kinase.